Here is a 1066-residue protein sequence, read N- to C-terminus: E3 ubiquitin-protein ligase PDZRN3 (1066 aa).

An RING-type; degenerate zinc finger spans residues 18–56 (CALCHKVLEDPLTTPCGHVFCAGCVLPWVVQEGSCPARC). Residues 100–158 (EHLERCDFAPARCRHAGCGQVLLRRDVEAHMRDACDARPVGRCQEGCGLPLTHGEQRAG) form a TRAF-type zinc finger. PDZ domains lie at 249–339 (TLVL…LRRT) and 419–503 (EVDL…IARP). Serine 427 bears the Phosphoserine mark. The interval 545-603 (QKKHDEDGGTTDTATILSNQHEKDSGVGRTDESTRNDESSEQENNGDDATASSNPLAGQ) is disordered. Over residues 554–563 (TTDTATILSN) the composition is skewed to polar residues. Basic and acidic residues predominate over residues 564–582 (QHEKDSGVGRTDESTRNDE). Residues 594–603 (TASSNPLAGQ) are compositionally biased toward polar residues. A coiled-coil region spans residues 679–704 (ESVDKELELLNEELRSIELECLSIVR). The span at 744-754 (TELPEKSDKDS) shows a compositional bias: basic and acidic residues. Disordered stretches follow at residues 744–778 (TELP…PDNS) and 808–863 (LLSI…LPSY). 2 stretches are compositionally biased toward polar residues: residues 755–769 (SSAY…STPL) and 845–855 (GSRSPTPSQKL). Positions 975–1025 (KEERKQHLVKAKEQRRRREFMMQSRLDCLKEQQAADDRKEMNILELSHKKM) form a coiled coil.

In terms of assembly, interacts with NLGN1 and EFNB2. Interacts with UBE2D2 and with MUSK via the first PDZ domain. Auto-ubiquitinated. In terms of tissue distribution, widely expressed, including in the heart, skeletal muscle and liver and, at lower levels, in the brain, colon, small intestine, placenta and lung. Down-regulated in ovarian serous papillary tumors.

Its subcellular location is the synapse. The protein localises to the cytoplasm. It carries out the reaction S-ubiquitinyl-[E2 ubiquitin-conjugating enzyme]-L-cysteine + [acceptor protein]-L-lysine = [E2 ubiquitin-conjugating enzyme]-L-cysteine + N(6)-ubiquitinyl-[acceptor protein]-L-lysine.. Its pathway is protein modification; protein ubiquitination. E3 ubiquitin-protein ligase. Plays an important role in regulating the surface level of MUSK on myotubes. Mediates the ubiquitination of MUSK, promoting its endocytosis and lysosomal degradation. Might contribute to terminal myogenic differentiation. The sequence is that of E3 ubiquitin-protein ligase PDZRN3 (PDZRN3) from Homo sapiens (Human).